Here is a 268-residue protein sequence, read N- to C-terminus: Calpain small subunit 1 (268 aa).

Position 1 is an N-acetylmethionine (Met1). Position 6 is a phosphoserine (Ser6). In terms of domain architecture, EF-hand 1; atypical spans 91-125 (EANESEEVRQFRRLFAQLAGDDMEVSATELMNILN). Positions 109, 112, 114, 119, 137, 152, 154, 156, 158, and 163 each coordinate Ca(2+). EF-hand domains follow at residues 139 to 172 (FGIDTCRSMVAVMDSDTTGKLGFEEFKYLWNNIK), 169 to 204 (NNIKRWQAIYKQFDTDRSGTICSSELPGAFEAAGFH), 205 to 233 (LNEHLYNMIIRRYSDESGNMDFDNFISCL), and 234 to 268 (VRLDAMFRAFKSLDKDGTGQIQVNIQEWLQLTMYS). Position 179 is an N6-acetyllysine (Lys179). Asp182, Asp184, Ser186, Thr188, Glu193, and Asp225 together coordinate Ca(2+).

As to quaternary structure, homodimer or heterodimer of a large (catalytic) and a small (regulatory) subunit. In presence of calcium, the heterodimer dissociates.

It localises to the cytoplasm. The protein localises to the cell membrane. Its function is as follows. Regulatory subunit of the calcium-regulated non-lysosomal thiol-protease which catalyzes limited proteolysis of substrates involved in cytoskeletal remodeling and signal transduction. Essential for embryonic development. This chain is Calpain small subunit 1 (CAPNS1), found in Homo sapiens (Human).